The sequence spans 93 residues: Pyrimidine/purine nucleoside phosphorylase (93 aa).

It belongs to the nucleoside phosphorylase PpnP family.

It catalyses the reaction a purine D-ribonucleoside + phosphate = a purine nucleobase + alpha-D-ribose 1-phosphate. The enzyme catalyses adenosine + phosphate = alpha-D-ribose 1-phosphate + adenine. The catalysed reaction is cytidine + phosphate = cytosine + alpha-D-ribose 1-phosphate. It carries out the reaction guanosine + phosphate = alpha-D-ribose 1-phosphate + guanine. It catalyses the reaction inosine + phosphate = alpha-D-ribose 1-phosphate + hypoxanthine. The enzyme catalyses thymidine + phosphate = 2-deoxy-alpha-D-ribose 1-phosphate + thymine. The catalysed reaction is uridine + phosphate = alpha-D-ribose 1-phosphate + uracil. It carries out the reaction xanthosine + phosphate = alpha-D-ribose 1-phosphate + xanthine. Catalyzes the phosphorolysis of diverse nucleosides, yielding D-ribose 1-phosphate and the respective free bases. Can use uridine, adenosine, guanosine, cytidine, thymidine, inosine and xanthosine as substrates. Also catalyzes the reverse reactions. The chain is Pyrimidine/purine nucleoside phosphorylase from Shewanella halifaxensis (strain HAW-EB4).